The sequence spans 435 residues: Mitochondrial association factor 1 form a1 (435 aa).

A signal peptide spans 1 to 20; the sequence is MWRIWRCRLSFLFATGCLLG. At 21–95 the chain is on the vacuolar side; the sequence is ALTAGLGSQM…SVTARRRRNR (75 aa). The tract at residues 43–88 is disordered; the sequence is GVADASQEAGDVVEERTERTEEQVFAPGPPRRHSSESLFPRNASVT. The segment covering 55–64 has biased composition (basic and acidic residues); it reads VEERTERTEE. Residues 96–116 traverse the membrane as a helical segment; sequence RIAPIATAVGVAVILAALYVL. Residues 117–435 lie on the Cytoplasmic side of the membrane; it reads RRRRAQPPQE…ERKYKFPQGD (319 aa). Positions 120-162 are disordered; the sequence is RAQPPQEPEPPTRLRTPRPRAPSEQQQPSESEPPAEVPMTPDP. Low complexity predominate over residues 141-153; the sequence is PSEQQQPSESEPP.

Interacts with host SAMM50.

The protein resides in the parasitophorous vacuole membrane. In terms of biological role, during host cell infection by tachyzoites, does not play a role in tethering the parasitophorous vacuole to the host mitochondria, probably because it does not bind host mitochondrial import protein TOMM70. The polypeptide is Mitochondrial association factor 1 form a1 (Toxoplasma gondii).